Reading from the N-terminus, the 559-residue chain is BTB/POZ domain-containing protein At5g47800 (559 aa).

Residues 28–96 form the BTB domain; sequence NDLVIRINNT…CYDITINLSA (69 aa). The NPH3 domain occupies 199–476; the sequence is DWWTEDISDL…VQALFFDQES (278 aa). Tyr417 is modified (phosphotyrosine). Low complexity predominate over residues 477-489; it reads GSKGASSRSESQE. Disordered stretches follow at residues 477–502 and 524–559; these read GSKGASSRSESQELFTRGKETPTDEH and EGCKRGEEKTRSSTDPKKIVWKGTGSEHKHHISRDR. Composition is skewed to basic and acidic residues over residues 492-502 and 524-541; these read TRGKETPTDEH and EGCKRGEEKTRSSTDPKK.

The protein belongs to the NPH3 family.

It participates in protein modification; protein ubiquitination. May act as a substrate-specific adapter of an E3 ubiquitin-protein ligase complex (CUL3-RBX1-BTB) which mediates the ubiquitination and subsequent proteasomal degradation of target proteins. This chain is BTB/POZ domain-containing protein At5g47800, found in Arabidopsis thaliana (Mouse-ear cress).